Consider the following 252-residue polypeptide: 5-oxoprolinase subunit A (252 aa).

This sequence belongs to the LamB/PxpA family. As to quaternary structure, forms a complex composed of PxpA, PxpB and PxpC.

It carries out the reaction 5-oxo-L-proline + ATP + 2 H2O = L-glutamate + ADP + phosphate + H(+). In terms of biological role, catalyzes the cleavage of 5-oxoproline to form L-glutamate coupled to the hydrolysis of ATP to ADP and inorganic phosphate. This Bacillus cytotoxicus (strain DSM 22905 / CIP 110041 / 391-98 / NVH 391-98) protein is 5-oxoprolinase subunit A.